The sequence spans 323 residues: 4-diphosphocytidyl-2-C-methyl-D-erythritol kinase (323 aa).

Lys-25 is a catalytic residue. 110–120 (PVAGGMAGGSA) contacts ATP. Residue Asp-152 is part of the active site.

Belongs to the GHMP kinase family. IspE subfamily.

The enzyme catalyses 4-CDP-2-C-methyl-D-erythritol + ATP = 4-CDP-2-C-methyl-D-erythritol 2-phosphate + ADP + H(+). It participates in isoprenoid biosynthesis; isopentenyl diphosphate biosynthesis via DXP pathway; isopentenyl diphosphate from 1-deoxy-D-xylulose 5-phosphate: step 3/6. In terms of biological role, catalyzes the phosphorylation of the position 2 hydroxy group of 4-diphosphocytidyl-2C-methyl-D-erythritol. The polypeptide is 4-diphosphocytidyl-2-C-methyl-D-erythritol kinase (Mycobacterium leprae (strain Br4923)).